We begin with the raw amino-acid sequence, 227 residues long: Cytochrome c oxidase subunit 2 (227 aa).

At 1 to 14 (MAYPFELGFQDATS) the chain is on the mitochondrial intermembrane side. A helical transmembrane segment spans residues 15-45 (PIMEELLHFHDHTLMIVFLISSLVLYIISLM). At 46–59 (LTTKLTHTSTMDAQ) the chain is on the mitochondrial matrix side. A helical transmembrane segment spans residues 60 to 87 (EVETIWTILPAIILILIALPSLRVLYMM). The Mitochondrial intermembrane portion of the chain corresponds to 88-227 (DEINDPSLTV…HFENWSSSML (140 aa)). 6 residues coordinate Cu cation: His161, Cys196, Glu198, Cys200, His204, and Met207. Glu198 is a binding site for Mg(2+).

It belongs to the cytochrome c oxidase subunit 2 family. As to quaternary structure, component of the cytochrome c oxidase (complex IV, CIV), a multisubunit enzyme composed of 14 subunits. The complex is composed of a catalytic core of 3 subunits MT-CO1, MT-CO2 and MT-CO3, encoded in the mitochondrial DNA, and 11 supernumerary subunits COX4I, COX5A, COX5B, COX6A, COX6B, COX6C, COX7A, COX7B, COX7C, COX8 and NDUFA4, which are encoded in the nuclear genome. The complex exists as a monomer or a dimer and forms supercomplexes (SCs) in the inner mitochondrial membrane with NADH-ubiquinone oxidoreductase (complex I, CI) and ubiquinol-cytochrome c oxidoreductase (cytochrome b-c1 complex, complex III, CIII), resulting in different assemblies (supercomplex SCI(1)III(2)IV(1) and megacomplex MCI(2)III(2)IV(2)). Found in a complex with TMEM177, COA6, COX18, COX20, SCO1 and SCO2. Interacts with TMEM177 in a COX20-dependent manner. Interacts with COX20. Interacts with COX16. Cu cation serves as cofactor.

The protein localises to the mitochondrion inner membrane. It carries out the reaction 4 Fe(II)-[cytochrome c] + O2 + 8 H(+)(in) = 4 Fe(III)-[cytochrome c] + 2 H2O + 4 H(+)(out). Component of the cytochrome c oxidase, the last enzyme in the mitochondrial electron transport chain which drives oxidative phosphorylation. The respiratory chain contains 3 multisubunit complexes succinate dehydrogenase (complex II, CII), ubiquinol-cytochrome c oxidoreductase (cytochrome b-c1 complex, complex III, CIII) and cytochrome c oxidase (complex IV, CIV), that cooperate to transfer electrons derived from NADH and succinate to molecular oxygen, creating an electrochemical gradient over the inner membrane that drives transmembrane transport and the ATP synthase. Cytochrome c oxidase is the component of the respiratory chain that catalyzes the reduction of oxygen to water. Electrons originating from reduced cytochrome c in the intermembrane space (IMS) are transferred via the dinuclear copper A center (CU(A)) of subunit 2 and heme A of subunit 1 to the active site in subunit 1, a binuclear center (BNC) formed by heme A3 and copper B (CU(B)). The BNC reduces molecular oxygen to 2 water molecules using 4 electrons from cytochrome c in the IMS and 4 protons from the mitochondrial matrix. The chain is Cytochrome c oxidase subunit 2 (MT-CO2) from Sciurus carolinensis (Eastern gray squirrel).